Here is a 95-residue protein sequence, read N- to C-terminus: Aspartyl/glutamyl-tRNA(Asn/Gln) amidotransferase subunit C (95 aa).

It belongs to the GatC family. As to quaternary structure, heterotrimer of A, B and C subunits.

The catalysed reaction is L-glutamyl-tRNA(Gln) + L-glutamine + ATP + H2O = L-glutaminyl-tRNA(Gln) + L-glutamate + ADP + phosphate + H(+). The enzyme catalyses L-aspartyl-tRNA(Asn) + L-glutamine + ATP + H2O = L-asparaginyl-tRNA(Asn) + L-glutamate + ADP + phosphate + 2 H(+). Its function is as follows. Allows the formation of correctly charged Asn-tRNA(Asn) or Gln-tRNA(Gln) through the transamidation of misacylated Asp-tRNA(Asn) or Glu-tRNA(Gln) in organisms which lack either or both of asparaginyl-tRNA or glutaminyl-tRNA synthetases. The reaction takes place in the presence of glutamine and ATP through an activated phospho-Asp-tRNA(Asn) or phospho-Glu-tRNA(Gln). In Chelativorans sp. (strain BNC1), this protein is Aspartyl/glutamyl-tRNA(Asn/Gln) amidotransferase subunit C.